Consider the following 72-residue polypeptide: Translation initiation factor IF-1 (72 aa).

Residues 1 to 72 (MAKEDNIEMQ…SKGRIVFRSR (72 aa)) form the S1-like domain.

Belongs to the IF-1 family. In terms of assembly, component of the 30S ribosomal translation pre-initiation complex which assembles on the 30S ribosome in the order IF-2 and IF-3, IF-1 and N-formylmethionyl-tRNA(fMet); mRNA recruitment can occur at any time during PIC assembly.

Its subcellular location is the cytoplasm. In terms of biological role, one of the essential components for the initiation of protein synthesis. Stabilizes the binding of IF-2 and IF-3 on the 30S subunit to which N-formylmethionyl-tRNA(fMet) subsequently binds. Helps modulate mRNA selection, yielding the 30S pre-initiation complex (PIC). Upon addition of the 50S ribosomal subunit IF-1, IF-2 and IF-3 are released leaving the mature 70S translation initiation complex. This chain is Translation initiation factor IF-1, found in Sodalis glossinidius (strain morsitans).